A 142-amino-acid chain; its full sequence is Negative cofactor 2 complex subunit alpha (142 aa).

Over residues 1–11 (MADQVPVTTQL) the composition is skewed to polar residues. The interval 1 to 43 (MADQVPVTTQLPPIKPEHEVPLDAGGSPVGNMGTNSNNNNELG) is disordered. At Ser-27 the chain carries Phosphoserine. One can recognise a Histone-fold domain in the interval 29–137 (VGNMGTNSNN…LCVEEGQTQP (109 aa)). Position 141 is a phosphoserine (Ser-141).

This sequence belongs to the NC2 alpha/DRAP1 family. In terms of assembly, component of the NC2 (negative cofactor 2) complex composed of BUR6 and NCB2. The NC2 complex associates with SPT15/TBP. Interacts with SPT15/TBP.

It is found in the nucleus. Its function is as follows. Component of the NC2 complex which represses RNA polymerase II transcription through binding to SPT15/TBP and thereby inhibiting the assembly of the preinitiation complex. The NC2 complex may also mediate transcriptional activation from TATA-driven promoters through association with SPT15/TBP. In Saccharomyces cerevisiae (strain ATCC 204508 / S288c) (Baker's yeast), this protein is Negative cofactor 2 complex subunit alpha (BUR6).